We begin with the raw amino-acid sequence, 299 residues long: Oxaloacetate decarboxylase (299 aa).

Ser-57 lines the substrate pocket. Position 95 (Asp-95) interacts with Mg(2+). Substrate is bound by residues Arg-167 and His-243.

This sequence belongs to the isocitrate lyase/PEP mutase superfamily. Oxaloacetate decarboxylase family. In terms of assembly, homotetramer; dimer of dimers. Requires Mg(2+) as cofactor.

It catalyses the reaction oxaloacetate + H(+) = pyruvate + CO2. In terms of biological role, catalyzes the decarboxylation of oxaloacetate into pyruvate. Seems to play a role in maintaining cellular concentrations of bicarbonate and pyruvate. In Paraburkholderia xenovorans (strain LB400), this protein is Oxaloacetate decarboxylase.